Consider the following 338-residue polypeptide: Glyceraldehyde-3-phosphate dehydrogenase 2 (338 aa).

NAD(+) contacts are provided by residues 11–12 (RI), aspartate 33, and arginine 78. D-glyceraldehyde 3-phosphate-binding positions include 149–151 (SCT), threonine 180, 209–210 (TG), and arginine 232. Catalysis depends on cysteine 150, which acts as the Nucleophile. Asparagine 314 contributes to the NAD(+) binding site.

The protein belongs to the glyceraldehyde-3-phosphate dehydrogenase family. In terms of assembly, homotetramer.

Its subcellular location is the cytoplasm. It carries out the reaction D-glyceraldehyde 3-phosphate + phosphate + NAD(+) = (2R)-3-phospho-glyceroyl phosphate + NADH + H(+). The protein operates within carbohydrate degradation; glycolysis; pyruvate from D-glyceraldehyde 3-phosphate: step 1/5. The polypeptide is Glyceraldehyde-3-phosphate dehydrogenase 2 (gpd2) (Agaricus bisporus (White button mushroom)).